We begin with the raw amino-acid sequence, 599 residues long: UvrABC system protein C (599 aa).

One can recognise a GIY-YIG domain in the interval 18-96 (QLPGVYRMLG…IKQHRPPYNI (79 aa)). The UVR domain maps to 207–242 (KELNQELIAKMEEAAEQLAFEKAMFYRDRLGLLREV).

Belongs to the UvrC family. In terms of assembly, interacts with UvrB in an incision complex.

The protein localises to the cytoplasm. In terms of biological role, the UvrABC repair system catalyzes the recognition and processing of DNA lesions. UvrC both incises the 5' and 3' sides of the lesion. The N-terminal half is responsible for the 3' incision and the C-terminal half is responsible for the 5' incision. The chain is UvrABC system protein C from Acinetobacter baylyi (strain ATCC 33305 / BD413 / ADP1).